We begin with the raw amino-acid sequence, 360 residues long: MSKQNHFLVINGKNCCVFRDENIAKVLPPVLGLEFVFGLLGNGLALWIFCFHLKSWKSSRIFLFNLAVADFLLIICLPFLTDNYVQNWDWRFGSIPCRVMLFMLAMNRQGSIIFLTVVAVDRYFRVVHPHHFLNKISNRTAAIISCFLWGITIGLTVHLLYTDMMTRNGDANLCSSFSICYTFRWHDAMFLLEFFLPLGIILFCSGRIIWSLRQRQMDRHVKIKRAINFIMVVAIVFVICFLPSVAVRIRIFWLLYKHNVRNCDIYSSVDLAFFTTLSFTYMNSMLDPVVYYFSSPSFPNFFSTCINRCLRRKTLGEPDNNRSTSVELTGDPSTIRSIPGALMTDPSEPGSPPYLASTSR.

Over 1-30 (MSKQNHFLVINGKNCCVFRDENIAKVLPPV) the chain is Extracellular. Residues 31–51 (LGLEFVFGLLGNGLALWIFCF) form a helical membrane-spanning segment. The Cytoplasmic segment spans residues 52–60 (HLKSWKSSR). A helical membrane pass occupies residues 61-81 (IFLFNLAVADFLLIICLPFLT). Over 82-98 (DNYVQNWDWRFGSIPCR) the chain is Extracellular. A disulfide bridge links Cys97 with Cys174. The chain crosses the membrane as a helical span at residues 99–119 (VMLFMLAMNRQGSIIFLTVVA). The Cytoplasmic segment spans residues 120-140 (VDRYFRVVHPHHFLNKISNRT). The chain crosses the membrane as a helical span at residues 141 to 161 (AAIISCFLWGITIGLTVHLLY). At 162 to 189 (TDMMTRNGDANLCSSFSICYTFRWHDAM) the chain is on the extracellular side. A helical membrane pass occupies residues 190 to 210 (FLLEFFLPLGIILFCSGRIIW). The Cytoplasmic portion of the chain corresponds to 211–226 (SLRQRQMDRHVKIKRA). A helical membrane pass occupies residues 227–247 (INFIMVVAIVFVICFLPSVAV). Over 248-270 (RIRIFWLLYKHNVRNCDIYSSVD) the chain is Extracellular. The helical transmembrane segment at 271-291 (LAFFTTLSFTYMNSMLDPVVY) threads the bilayer. Residues 292–360 (YFSSPSFPNF…SPPYLASTSR (69 aa)) lie on the Cytoplasmic side of the membrane. Residues 320–360 (NNRSTSVELTGDPSTIRSIPGALMTDPSEPGSPPYLASTSR) form a disordered region. Polar residues predominate over residues 321–336 (NRSTSVELTGDPSTIR). The residue at position 325 (Ser325) is a Phosphoserine.

This sequence belongs to the G-protein coupled receptor 1 family. In terms of tissue distribution, expressed in adipose tissue, lung and spleen.

Its subcellular location is the cell membrane. Its function is as follows. Acts as a high affinity receptor for both nicotinic acid (also known as niacin) and (D)-beta-hydroxybutyrate and mediates increased adiponectin secretion and decreased lipolysis through G(i)-protein-mediated inhibition of adenylyl cyclase. This pharmacological effect requires nicotinic acid doses that are much higher than those provided by a normal diet. Mediates nicotinic acid-induced apoptosis in mature neutrophils. Receptor activation by nicotinic acid results in reduced cAMP levels which may affect activity of cAMP-dependent protein kinase A and phosphorylation of target proteins, leading to neutrophil apoptosis. The rank order of potency for the displacement of nicotinic acid binding is 5-methyl pyrazole-3-carboxylic acid = pyridine-3-acetic acid &gt; acifran &gt; 5-methyl nicotinic acid = acipimox &gt;&gt; nicotinuric acid = nicotinamide. The sequence is that of Hydroxycarboxylic acid receptor 2 (Hcar2) from Rattus norvegicus (Rat).